A 414-amino-acid chain; its full sequence is Gamma-glutamyl phosphate reductase (414 aa).

The protein belongs to the gamma-glutamyl phosphate reductase family.

It localises to the cytoplasm. It carries out the reaction L-glutamate 5-semialdehyde + phosphate + NADP(+) = L-glutamyl 5-phosphate + NADPH + H(+). It functions in the pathway amino-acid biosynthesis; L-proline biosynthesis; L-glutamate 5-semialdehyde from L-glutamate: step 2/2. Catalyzes the NADPH-dependent reduction of L-glutamate 5-phosphate into L-glutamate 5-semialdehyde and phosphate. The product spontaneously undergoes cyclization to form 1-pyrroline-5-carboxylate. This chain is Gamma-glutamyl phosphate reductase, found in Thermoanaerobacter pseudethanolicus (strain ATCC 33223 / 39E) (Clostridium thermohydrosulfuricum).